We begin with the raw amino-acid sequence, 161 residues long: Small ribosomal subunit protein uS9 (161 aa).

The span at 1–21 (MATLQSLADLNRANTQTSNPE) shows a compositional bias: polar residues. The interval 1–25 (MATLQSLADLNRANTQTSNPENEAP) is disordered.

This sequence belongs to the universal ribosomal protein uS9 family.

This chain is Small ribosomal subunit protein uS9, found in Methylorubrum extorquens (strain CM4 / NCIMB 13688) (Methylobacterium extorquens).